A 195-amino-acid chain; its full sequence is Cysteine/O-acetylserine efflux protein (195 aa).

Over 1 to 7 (MTPTLLS) the chain is Periplasmic. A helical transmembrane segment spans residues 8–28 (AFWTYTLITAMTPGPNNILAL). The Cytoplasmic segment spans residues 29 to 46 (SSATTHGFHQSTRVLAGM). The helical transmembrane segment at 47–67 (SLGFLIVMLLCAGISFSLAVI) threads the bilayer. The Periplasmic segment spans residues 68–69 (DP). Residues 70 to 90 (AAVHLLSWAGAAYIVWLAWKI) form a helical membrane-spanning segment. At 91 to 104 (ATSPTKEDGLQTKP) the chain is on the cytoplasmic side. Residues 105 to 125 (ISFWASFALQFVNVKIILYGV) traverse the membrane as a helical segment. At 126 to 141 (TALSTFVLPQTQALSW) the chain is on the periplasmic side. A helical membrane pass occupies residues 142–162 (IVGVSVLLAMIGTFGNVCWAL). The Cytoplasmic segment spans residues 163–176 (AGHLFQRLFRQYGR). A helical transmembrane segment spans residues 177–194 (QLNIVLALLLIYCAVRIF). Tyr195 is a topological domain (periplasmic).

This sequence belongs to the Rht family.

Its subcellular location is the cell inner membrane. It carries out the reaction O-acetyl-L-serine(in) = O-acetyl-L-serine(out). It catalyses the reaction L-cysteine(in) = L-cysteine(out). Its function is as follows. Exporter of O-acetylserine (OAS) and cysteine. The polypeptide is Cysteine/O-acetylserine efflux protein (eamB) (Escherichia coli O157:H7).